Reading from the N-terminus, the 1982-residue chain is Ras guanine nucleotide exchange factor V (1982 aa).

LRR repeat units lie at residues M1–G26, L47–L68, S69–P94, N105–L128, N130–G151, A164–Q187, L188–N210, V212–L234, K236–G257, L261–I284, S286–L307, L308–L330, I331–K352, S354–L376, and Q378–S399. Residues M1 to N1831 are Extracellular-facing. Disordered stretches follow at residues Y414–G436, N457–Q532, and N615–S654. Composition is skewed to low complexity over residues G415–G436 and N457–G495. The LRR 16 repeat unit spans residues D443–N466. Polar residues predominate over residues L506–L520. Residues G515–G567 adopt a coiled-coil conformation. One copy of the LRR 17 repeat lies at E592 to N615. The span at N616 to T642 shows a compositional bias: gly residues. LRR repeat units follow at residues L657–G684 and H773–S796. 2 disordered regions span residues Q756–Q778 and L807–P829. Positions T832 to G1236 constitute a GBD/FH3 domain. LRR repeat units lie at residues L979–L1003, S1075–I1100, V1239–D1263, and V1689–L1712. Residues K1595–Y1717 enclose the N-terminal Ras-GEF domain. Positions D1747–R1974 constitute a Ras-GEF domain. A helical transmembrane segment spans residues Y1832–L1848. At R1849–Q1982 the chain is on the cytoplasmic side. 2 LRR repeats span residues L1865–A1888 and R1917–Y1941.

Its subcellular location is the membrane. In terms of biological role, promotes the exchange of Ras-bound GDP by GTP. In Dictyostelium discoideum (Social amoeba), this protein is Ras guanine nucleotide exchange factor V (gefV).